A 253-amino-acid chain; its full sequence is Phycoerythrobilin:ferredoxin oxidoreductase (253 aa).

The protein belongs to the HY2 family.

The catalysed reaction is (3Z)-phycoerythrobilin + oxidized 2[4Fe-4S]-[ferredoxin] = 15,16-dihydrobiliverdin + reduced 2[4Fe-4S]-[ferredoxin] + 2 H(+). In terms of biological role, catalyzes the two-electron reduction of the C2 and C3(1) diene system of 15,16-dihydrobiliverdin. In Prochlorococcus marinus (strain AS9601), this protein is Phycoerythrobilin:ferredoxin oxidoreductase.